We begin with the raw amino-acid sequence, 202 residues long: Nucleoside triphosphate pyrophosphatase (202 aa).

The Proton acceptor role is filled by Asp-79.

Belongs to the Maf family. The cofactor is a divalent metal cation.

The protein localises to the cytoplasm. It carries out the reaction a ribonucleoside 5'-triphosphate + H2O = a ribonucleoside 5'-phosphate + diphosphate + H(+). It catalyses the reaction a 2'-deoxyribonucleoside 5'-triphosphate + H2O = a 2'-deoxyribonucleoside 5'-phosphate + diphosphate + H(+). Its function is as follows. Nucleoside triphosphate pyrophosphatase. May have a dual role in cell division arrest and in preventing the incorporation of modified nucleotides into cellular nucleic acids. The chain is Nucleoside triphosphate pyrophosphatase from Rhodopseudomonas palustris (strain HaA2).